A 762-amino-acid polypeptide reads, in one-letter code: Protein PHTF1 (762 aa).

The region spanning 6–150 (RDAISWYQKK…VHCQIVSTQI (145 aa)) is the PHTF domain. 3 helical membrane-spanning segments follow: residues 77 to 97 (GLVRVVFFPLFSSWWIQVTSL), 99 to 119 (IFVWLLLLYLMQVTAIVLYLM), and 121 to 141 (PIVSVSEVLGPLCLMLLMGTV). The segment at 152-184 (RPSGNNGNRRRRKLRKTVNGDGTRDNGNNSPDK) is disordered. N-linked (GlcNAc...) asparagine glycans are attached at residues asparagine 179 and asparagine 224. A phosphoserine mark is found at serine 272, serine 276, serine 277, serine 334, and serine 336. Residues 345 to 415 (AAFSQGSRSG…NTLHSGTKRD (71 aa)) are disordered. Low complexity predominate over residues 348-364 (SQGSRSGMSGGSRSLNL). The N-linked (GlcNAc...) asparagine glycan is linked to asparagine 363. Residues 365-376 (SRRDSESTRHDS) show a composition bias toward basic and acidic residues. The N-linked (GlcNAc...) asparagine glycan is linked to asparagine 431. Helical transmembrane passes span 473 to 493 (GVGYQMLGNAVTIGLALFPFL), 515 to 535 (TLFCGAPPVTPVVILSIINFF), 611 to 631 (VVVSSVFLLTLSIAFICCAQV), and 645 to 665 (WEFLIWETALLLFLLRLASLG). Asparagine 674 and asparagine 733 each carry an N-linked (GlcNAc...) asparagine glycan. The chain crosses the membrane as a helical span at residues 737-757 (VVILSAVSGVISDLLGFNIRL).

As to quaternary structure, interacts with FEM1B. In terms of tissue distribution, highly expressed in testis.

Its subcellular location is the endoplasmic reticulum membrane. The protein localises to the golgi apparatus. It localises to the cis-Golgi network membrane. In Rattus norvegicus (Rat), this protein is Protein PHTF1.